The sequence spans 113 residues: Ig kappa chain V-II region 17S29.1 (113 aa).

The tract at residues 1–23 (DIVMTQAVFSNPVTLGTSASISC) is framework-1. A disulfide bond links C23 and C93. The interval 24-39 (RSSKSLLHSNGITYLY) is complementarity-determining-1. The segment at 40 to 54 (WYLQKPGQSPQLLLY) is framework-2. A complementarity-determining-2 region spans residues 55–61 (QMSNLAS). Residues 62 to 93 (GVPDRFSSSGSGTDFTLRISRVEAEDVGVYYC) are framework-3. Residues 94 to 102 (AHNLELPYT) form a complementarity-determining-3 region. The segment at 103 to 112 (FGGGTKLEIK) is framework-4.

Anti-streptococcal group A carbohydrate antibody. The protein is Ig kappa chain V-II region 17S29.1 of Mus musculus (Mouse).